The following is a 489-amino-acid chain: Glutamyl-tRNA(Gln) amidotransferase subunit A (489 aa).

Catalysis depends on charge relay system residues Lys-80 and Ser-160. The active-site Acyl-ester intermediate is Ser-184.

It belongs to the amidase family. GatA subfamily. In terms of assembly, heterotrimer of A, B and C subunits.

It catalyses the reaction L-glutamyl-tRNA(Gln) + L-glutamine + ATP + H2O = L-glutaminyl-tRNA(Gln) + L-glutamate + ADP + phosphate + H(+). In terms of biological role, allows the formation of correctly charged Gln-tRNA(Gln) through the transamidation of misacylated Glu-tRNA(Gln) in organisms which lack glutaminyl-tRNA synthetase. The reaction takes place in the presence of glutamine and ATP through an activated gamma-phospho-Glu-tRNA(Gln). This chain is Glutamyl-tRNA(Gln) amidotransferase subunit A, found in Wolbachia sp. subsp. Drosophila simulans (strain wRi).